We begin with the raw amino-acid sequence, 190 residues long: Probable RNA-binding protein 18 (190 aa).

In terms of domain architecture, RRM spans His25 to Ala106.

This Xenopus laevis (African clawed frog) protein is Probable RNA-binding protein 18 (rbm18).